Here is a 165-residue protein sequence, read N- to C-terminus: Peptide methionine sulfoxide reductase MsrA (165 aa).

Residue Cys11 is part of the active site.

Belongs to the MsrA Met sulfoxide reductase family.

The catalysed reaction is L-methionyl-[protein] + [thioredoxin]-disulfide + H2O = L-methionyl-(S)-S-oxide-[protein] + [thioredoxin]-dithiol. It catalyses the reaction [thioredoxin]-disulfide + L-methionine + H2O = L-methionine (S)-S-oxide + [thioredoxin]-dithiol. Has an important function as a repair enzyme for proteins that have been inactivated by oxidation. Catalyzes the reversible oxidation-reduction of methionine sulfoxide in proteins to methionine. This chain is Peptide methionine sulfoxide reductase MsrA, found in Ureaplasma parvum serovar 3 (strain ATCC 27815 / 27 / NCTC 11736).